The primary structure comprises 238 residues: uncharacterized protein (238 aa).

Transmembrane regions (helical) follow at residues 19–39 (FIYG…LLGW), 64–84 (WSVI…IYNW), 85–105 (QVLY…YFTK), 112–132 (LWND…SYYF), 141–161 (ILWV…YVKS), 176–196 (VIFH…ILAL), and 218–238 (VGLI…VATL).

The protein to B.subtilis YwiC.

The protein resides in the cell membrane. This is an uncharacterized protein from Haemophilus influenzae (strain ATCC 51907 / DSM 11121 / KW20 / Rd).